A 291-amino-acid polypeptide reads, in one-letter code: Acetyl-coenzyme A carboxylase carboxyl transferase subunit beta (291 aa).

Residues 1–23 (MSWLSKLMPSGIRTDNTPSKKRS) are disordered. The CoA carboxyltransferase N-terminal domain occupies 28 to 291 (LWEKCSNCGS…LGRQPAPEVA (264 aa)). Zn(2+) is bound by residues cysteine 32, cysteine 35, cysteine 51, and cysteine 54. The segment at 32 to 54 (CSNCGSALYRPELEENLEVCPKC) adopts a C4-type zinc-finger fold.

Belongs to the AccD/PCCB family. Acetyl-CoA carboxylase is a heterohexamer composed of biotin carboxyl carrier protein (AccB), biotin carboxylase (AccC) and two subunits each of ACCase subunit alpha (AccA) and ACCase subunit beta (AccD). Zn(2+) is required as a cofactor.

It localises to the cytoplasm. The enzyme catalyses N(6)-carboxybiotinyl-L-lysyl-[protein] + acetyl-CoA = N(6)-biotinyl-L-lysyl-[protein] + malonyl-CoA. It functions in the pathway lipid metabolism; malonyl-CoA biosynthesis; malonyl-CoA from acetyl-CoA: step 1/1. In terms of biological role, component of the acetyl coenzyme A carboxylase (ACC) complex. Biotin carboxylase (BC) catalyzes the carboxylation of biotin on its carrier protein (BCCP) and then the CO(2) group is transferred by the transcarboxylase to acetyl-CoA to form malonyl-CoA. This is Acetyl-coenzyme A carboxylase carboxyl transferase subunit beta from Stenotrophomonas maltophilia (strain R551-3).